Consider the following 167-residue polypeptide: uncharacterized protein (167 aa).

This is an uncharacterized protein from Acidianus bottle-shaped virus (isolate Italy/Pozzuoli) (ABV).